The chain runs to 258 residues: Global transcriptional regulator CodY (258 aa).

The GAF domain stretch occupies residues Met-1–Leu-156. Positions Ala-204 to Arg-223 form a DNA-binding region, H-T-H motif.

It belongs to the CodY family.

Its subcellular location is the cytoplasm. In terms of biological role, DNA-binding global transcriptional regulator which is involved in the adaptive response to starvation and acts by directly or indirectly controlling the expression of numerous genes in response to nutrient availability. During rapid exponential growth, CodY is highly active and represses genes whose products allow adaptation to nutrient depletion. In Clostridium tetani (strain Massachusetts / E88), this protein is Global transcriptional regulator CodY.